The chain runs to 201 residues: Large ribosomal subunit protein uL4 (201 aa).

The interval Ala-45–Ser-72 is disordered.

This sequence belongs to the universal ribosomal protein uL4 family. Part of the 50S ribosomal subunit.

Its function is as follows. One of the primary rRNA binding proteins, this protein initially binds near the 5'-end of the 23S rRNA. It is important during the early stages of 50S assembly. It makes multiple contacts with different domains of the 23S rRNA in the assembled 50S subunit and ribosome. Functionally, forms part of the polypeptide exit tunnel. In Shewanella baltica (strain OS223), this protein is Large ribosomal subunit protein uL4.